Consider the following 335-residue polypeptide: MKPLAVTLGDPSGIGPEIVAKAWSRRKSDQIMPFFAIGSAASIQAVSSIPVVAITDPNEAISIFDQALPVWDIPSKETITPGKPNKAGAEVAFAALEKGVALVKQGQASALVTAPVSKAELYQVGFTFPGQTEFVANRCGIAADDAVMMLAGPDLRTVPLTIHIPYRDVLEQLTPKLIISRARVTVEDLKRNFAIPSPRLVVAGLNPHAGENGTIGREEIDSIEPAIRQLQAENIDIKGPFAADTLFSPRARATYDVALCPTHDQALIPIKTINFDNGVNTTLGLPIIRTSPDHGTAFPLAGKNKADEGAMVAALVMAANSAHNRQAYAQNSIDG.

A substrate-binding site is contributed by Thr-132. A divalent metal cation contacts are provided by His-163, His-208, and His-263. Substrate contacts are provided by Lys-271, Asn-280, and Arg-289.

Belongs to the PdxA family. In terms of assembly, homodimer. Requires Zn(2+) as cofactor. It depends on Mg(2+) as a cofactor. Co(2+) is required as a cofactor.

Its subcellular location is the cytoplasm. It carries out the reaction 4-(phosphooxy)-L-threonine + NAD(+) = 3-amino-2-oxopropyl phosphate + CO2 + NADH. It participates in cofactor biosynthesis; pyridoxine 5'-phosphate biosynthesis; pyridoxine 5'-phosphate from D-erythrose 4-phosphate: step 4/5. Catalyzes the NAD(P)-dependent oxidation of 4-(phosphooxy)-L-threonine (HTP) into 2-amino-3-oxo-4-(phosphooxy)butyric acid which spontaneously decarboxylates to form 3-amino-2-oxopropyl phosphate (AHAP). The polypeptide is 4-hydroxythreonine-4-phosphate dehydrogenase (Zymomonas mobilis subsp. mobilis (strain ATCC 31821 / ZM4 / CP4)).